Reading from the N-terminus, the 209-residue chain is Large ribosomal subunit protein uL3 (209 aa).

This sequence belongs to the universal ribosomal protein uL3 family. In terms of assembly, part of the 50S ribosomal subunit. Forms a cluster with proteins L14 and L19.

One of the primary rRNA binding proteins, it binds directly near the 3'-end of the 23S rRNA, where it nucleates assembly of the 50S subunit. This chain is Large ribosomal subunit protein uL3, found in Lactiplantibacillus plantarum (strain ATCC BAA-793 / NCIMB 8826 / WCFS1) (Lactobacillus plantarum).